The primary structure comprises 88 residues: Small ribosomal subunit protein uS15 (88 aa).

Belongs to the universal ribosomal protein uS15 family. Part of the 30S ribosomal subunit. Forms a bridge to the 50S subunit in the 70S ribosome, contacting the 23S rRNA.

One of the primary rRNA binding proteins, it binds directly to 16S rRNA where it helps nucleate assembly of the platform of the 30S subunit by binding and bridging several RNA helices of the 16S rRNA. Functionally, forms an intersubunit bridge (bridge B4) with the 23S rRNA of the 50S subunit in the ribosome. The protein is Small ribosomal subunit protein uS15 of Leptospira interrogans serogroup Icterohaemorrhagiae serovar copenhageni (strain Fiocruz L1-130).